A 259-amino-acid chain; its full sequence is 5'-nucleotidase SurE (259 aa).

Asp-8, Asp-9, Ser-40, and Asn-92 together coordinate a divalent metal cation.

This sequence belongs to the SurE nucleotidase family. Requires a divalent metal cation as cofactor.

The protein localises to the cytoplasm. It carries out the reaction a ribonucleoside 5'-phosphate + H2O = a ribonucleoside + phosphate. In terms of biological role, nucleotidase that shows phosphatase activity on nucleoside 5'-monophosphates. The polypeptide is 5'-nucleotidase SurE (Xanthomonas oryzae pv. oryzae (strain MAFF 311018)).